We begin with the raw amino-acid sequence, 296 residues long: ATP synthase peripheral stalk subunit OSCP, mitochondrial (296 aa).

It belongs to the ATPase delta chain family. As to quaternary structure, component of the ATP synthase complex composed at least of ATP5F1A/subunit alpha, ATP5F1B/subunit beta, ATP5MC1/subunit c (homooctomer), MT-ATP6/subunit a, MT-ATP8/subunit 8, ATP5ME/subunit e, ATP5MF/subunit f, ATP5MG/subunit g, ATP5MK/subunit k, ATP5MJ/subunit j, ATP5F1C/subunit gamma, ATP5F1D/subunit delta, ATP5F1E/subunit epsilon, ATP5PF/subunit F6, ATP5PB/subunit b, ATP5PD/subunit d, ATP5PO/subunit OSCP. ATP synthase complex consists of a soluble F(1) head domain (subunits alpha(3) and beta(3)) - the catalytic core - and a membrane F(0) domain - the membrane proton channel (subunits c, a, 8, e, f, g, k and j). These two domains are linked by a central stalk (subunits gamma, delta, and epsilon) rotating inside the F1 region and a stationary peripheral stalk (subunits F6, b, d, and OSCP).

The protein localises to the mitochondrion. Its subcellular location is the mitochondrion inner membrane. Functionally, subunit OSCP, of the mitochondrial membrane ATP synthase complex (F(1)F(0) ATP synthase or Complex V) that produces ATP from ADP in the presence of a proton gradient across the membrane which is generated by electron transport complexes of the respiratory chain. ATP synthase complex consist of a soluble F(1) head domain - the catalytic core - and a membrane F(1) domain - the membrane proton channel. These two domains are linked by a central stalk rotating inside the F(1) region and a stationary peripheral stalk. During catalysis, ATP synthesis in the catalytic domain of F(1) is coupled via a rotary mechanism of the central stalk subunits to proton translocation. In vivo, can only synthesize ATP although its ATP hydrolase activity can be activated artificially in vitro. Part of the complex F(0) domain. Part of the complex F(0) domain and the peripheric stalk, which acts as a stator to hold the catalytic alpha(3)beta(3) subcomplex and subunit a/ATP6 static relative to the rotary elements. This chain is ATP synthase peripheral stalk subunit OSCP, mitochondrial, found in Dictyostelium discoideum (Social amoeba).